The chain runs to 133 residues: Small ribosomal subunit protein uS8 (133 aa).

Belongs to the universal ribosomal protein uS8 family. Part of the 30S ribosomal subunit. Contacts proteins S5 and S12.

Functionally, one of the primary rRNA binding proteins, it binds directly to 16S rRNA central domain where it helps coordinate assembly of the platform of the 30S subunit. This chain is Small ribosomal subunit protein uS8, found in Mycoplasma mobile (strain ATCC 43663 / 163K / NCTC 11711) (Mesomycoplasma mobile).